The following is a 456-amino-acid chain: Probable serine/threonine-protein kinase DDB_G0277449 (456 aa).

The segment covering 50–83 has biased composition (low complexity); that stretch reads STSPTECEESSSSTITTPSEESLSSGEESSSISD. The interval 50 to 84 is disordered; it reads STSPTECEESSSSTITTPSEESLSSGEESSSISDS. Residues 128 to 383 form the Protein kinase domain; the sequence is FIIKHLVGKG…AIEIKRHPFF (256 aa). Residues 134–142 and Lys-157 each bind ATP; that span reads VGKGGFGKV. The Proton acceptor role is filled by Asp-251. An AGC-kinase C-terminal domain is found at 384-455; sequence KSIQWRKIEN…VRTPVLLESQ (72 aa).

It belongs to the protein kinase superfamily. AGC Ser/Thr protein kinase family.

It catalyses the reaction L-seryl-[protein] + ATP = O-phospho-L-seryl-[protein] + ADP + H(+). The catalysed reaction is L-threonyl-[protein] + ATP = O-phospho-L-threonyl-[protein] + ADP + H(+). This chain is Probable serine/threonine-protein kinase DDB_G0277449, found in Dictyostelium discoideum (Social amoeba).